A 255-amino-acid polypeptide reads, in one-letter code: Ribosomal RNA small subunit methyltransferase A (255 aa).

Asparagine 12, leucine 14, glycine 39, glutamate 60, aspartate 84, and asparagine 102 together coordinate S-adenosyl-L-methionine.

This sequence belongs to the class I-like SAM-binding methyltransferase superfamily. rRNA adenine N(6)-methyltransferase family. RsmA subfamily.

It localises to the cytoplasm. It catalyses the reaction adenosine(1518)/adenosine(1519) in 16S rRNA + 4 S-adenosyl-L-methionine = N(6)-dimethyladenosine(1518)/N(6)-dimethyladenosine(1519) in 16S rRNA + 4 S-adenosyl-L-homocysteine + 4 H(+). In terms of biological role, specifically dimethylates two adjacent adenosines (A1518 and A1519) in the loop of a conserved hairpin near the 3'-end of 16S rRNA in the 30S particle. May play a critical role in biogenesis of 30S subunits. The chain is Ribosomal RNA small subunit methyltransferase A from Methylobacillus flagellatus (strain ATCC 51484 / DSM 6875 / VKM B-1610 / KT).